We begin with the raw amino-acid sequence, 600 residues long: Threonine dehydratase, mitochondrial (600 aa).

An N6-(pyridoxal phosphate)lysine modification is found at K144. ACT-like domains follow at residues 425 to 497 and 519 to 590; these read VFLS…DISD and RLYR…DETN.

The protein belongs to the serine/threonine dehydratase family. In terms of assembly, homotetramer. The cofactor is pyridoxal 5'-phosphate.

It is found in the mitochondrion. It localises to the cytoplasm. The catalysed reaction is L-threonine = 2-oxobutanoate + NH4(+). It functions in the pathway amino-acid biosynthesis; L-isoleucine biosynthesis; 2-oxobutanoate from L-threonine: step 1/1. Isoleucine allosterically inhibits while valine allosterically activates this enzyme. In Schizosaccharomyces pombe (strain 972 / ATCC 24843) (Fission yeast), this protein is Threonine dehydratase, mitochondrial.